A 378-amino-acid polypeptide reads, in one-letter code: Odorant receptor 45a (378 aa).

At 1–30 (MDASYFAVQRRALEIVGFDPSTPQLSLKHP) the chain is on the cytoplasmic side. A helical membrane pass occupies residues 31–51 (IWAGILILSLISHNWPMVVYA). Residues 52-129 (LQDLSDLTRL…RYVARSFRNA (78 aa)) lie on the Extracellular side of the membrane. A helical membrane pass occupies residues 130-150 (AYGVICASAIAPMLLGLWGYV). Residues 151–173 (ETGVFTPTTPMEFNFWLDERKPH) are Cytoplasmic-facing. The helical transmembrane segment at 174–194 (FYWPIYVWGVLGVAAAAWLAI) threads the bilayer. Residues 195-197 (ATD) are Extracellular-facing. A helical transmembrane segment spans residues 198-218 (TLFSWLTHNVVIQFQLLELVL). The Cytoplasmic segment spans residues 219-249 (EEKDLNGGDSRLTGFVSRHRIALDLAKELSS). The chain crosses the membrane as a helical span at residues 250–270 (IFGEIVFVKYMLSYLQLCMLA). The Extracellular portion of the chain corresponds to 271–285 (FRFSRSGWSAQVPFR). The helical transmembrane segment at 286–306 (ATFLVAIIIQLSSYCYGGEYI) threads the bilayer. The Cytoplasmic segment spans residues 307–342 (KQQSLAIAQAVYGQINWPEMTPKKRRLWQMVIMRAQ). A helical membrane pass occupies residues 343–363 (RPAKIFGFMFVVDLPLLLWVI). Over 364–378 (RTAGSFLAMLRTFER) the chain is Extracellular.

It belongs to the insect chemoreceptor superfamily. Heteromeric odorant receptor channel (TC 1.A.69) family. Or1a subfamily. As to quaternary structure, interacts with Orco. Complexes exist early in the endomembrane system in olfactory sensory neurons (OSNs), coupling these complexes to the conserved ciliary trafficking pathway.

The protein localises to the cell membrane. Functionally, odorant receptor which mediates acceptance or avoidance behavior, depending on its substrates. The odorant receptor repertoire encodes a large collection of odor stimuli that vary widely in identity, intensity, and duration. May form a complex with Orco to form odorant-sensing units, providing sensitive and prolonged odorant signaling and calcium permeability. Involved in the behavioral responses to hexanol, pentyl acetate, benzyl acetate, and 2-heptanone. The sequence is that of Odorant receptor 45a (Or45a) from Drosophila melanogaster (Fruit fly).